The sequence spans 61 residues: MAKKSMIVRNARQPKYAVRHHNRCKLCGRPHAYIRKFGICRICFRELAYKGELPGVKKASW.

Zn(2+)-binding residues include cysteine 24, cysteine 27, cysteine 40, and cysteine 43.

It belongs to the universal ribosomal protein uS14 family. Zinc-binding uS14 subfamily. In terms of assembly, part of the 30S ribosomal subunit. Contacts proteins S3 and S10. The cofactor is Zn(2+).

Its function is as follows. Binds 16S rRNA, required for the assembly of 30S particles and may also be responsible for determining the conformation of the 16S rRNA at the A site. The protein is Small ribosomal subunit protein uS14 of Desulfitobacterium hafniense (strain Y51).